We begin with the raw amino-acid sequence, 466 residues long: Ribulose bisphosphate carboxylase large chain (466 aa).

N6,N6,N6-trimethyllysine is present on K5. 2 residues coordinate substrate: N114 and T164. K166 (proton acceptor) is an active-site residue. K168 is a binding site for substrate. Residues K192, D194, and E195 each contribute to the Mg(2+) site. N6-carboxylysine is present on K192. The active-site Proton acceptor is the H285. 3 residues coordinate substrate: R286, H318, and S370.

It belongs to the RuBisCO large chain family. Type I subfamily. Heterohexadecamer of 8 large chains and 8 small chains. The cofactor is Mg(2+).

It localises to the plastid. It is found in the chloroplast. The catalysed reaction is 2 (2R)-3-phosphoglycerate + 2 H(+) = D-ribulose 1,5-bisphosphate + CO2 + H2O. The enzyme catalyses D-ribulose 1,5-bisphosphate + O2 = 2-phosphoglycolate + (2R)-3-phosphoglycerate + 2 H(+). In terms of biological role, ruBisCO catalyzes two reactions: the carboxylation of D-ribulose 1,5-bisphosphate, the primary event in carbon dioxide fixation, as well as the oxidative fragmentation of the pentose substrate in the photorespiration process. Both reactions occur simultaneously and in competition at the same active site. The chain is Ribulose bisphosphate carboxylase large chain from Cornus kousa (Kousa dogwood).